Reading from the N-terminus, the 418-residue chain is Serine/threonine-protein kinase Sgk1 (418 aa).

The segment at 50–78 (PQEPELLNENSSPPPSPSQQINLGPSSNP) is disordered. Residues 68-78 (QQINLGPSSNP) are compositionally biased toward polar residues. The region spanning 85 to 342 (FQFLKIIGKG…FMEIKNHMFF (258 aa)) is the Protein kinase domain. Residues 91-99 (IGKGSFGKV) and Lys-114 contribute to the ATP site. The active-site Proton acceptor is Asp-209. The AGC-kinase C-terminal domain occupies 343-418 (SPINWDDLIN…SYAPPMESYL (76 aa)).

It belongs to the protein kinase superfamily. AGC Ser/Thr protein kinase family.

It is found in the cytoplasm. It localises to the nucleus. The protein localises to the endoplasmic reticulum. The enzyme catalyses L-seryl-[protein] + ATP = O-phospho-L-seryl-[protein] + ADP + H(+). It catalyses the reaction L-threonyl-[protein] + ATP = O-phospho-L-threonyl-[protein] + ADP + H(+). Its function is as follows. Protein kinase that may play an important role in cellular stress response. Plays an important role in activating certain potassium, sodium, and chloride channels, suggesting an involvement in the regulation of processes such as cell survival, neuronal excitability, and renal sodium excretion. The protein is Serine/threonine-protein kinase Sgk1 (sgk1) of Xenopus tropicalis (Western clawed frog).